The sequence spans 384 residues: Histidinol-phosphate aminotransferase 2 (384 aa).

Lysine 236 carries the post-translational modification N6-(pyridoxal phosphate)lysine.

This sequence belongs to the class-II pyridoxal-phosphate-dependent aminotransferase family. Histidinol-phosphate aminotransferase subfamily. As to quaternary structure, homodimer. It depends on pyridoxal 5'-phosphate as a cofactor.

It carries out the reaction L-histidinol phosphate + 2-oxoglutarate = 3-(imidazol-4-yl)-2-oxopropyl phosphate + L-glutamate. The protein operates within amino-acid biosynthesis; L-histidine biosynthesis; L-histidine from 5-phospho-alpha-D-ribose 1-diphosphate: step 7/9. The protein is Histidinol-phosphate aminotransferase 2 (hisC2) of Nostoc sp. (strain PCC 7120 / SAG 25.82 / UTEX 2576).